The following is a 443-amino-acid chain: Putative transporter AmpG 1 (443 aa).

12 helical membrane-spanning segments follow: residues 6 to 26, 43 to 63, 74 to 96, 106 to 128, 144 to 164, 172 to 192, 255 to 275, 300 to 320, 326 to 346, 355 to 375, 394 to 414, and 416 to 436; these read HVCI…MITG, IGIL…APVF, ILGH…TSIL, VLLS…ILSA, GIYI…AIYL, KIYQ…ILVS, DISL…YRLP, VCKF…GIIM, LYSI…FILL, ILFI…TAYI, LSSM…YMVV, and FGWQ…LLIL.

The protein belongs to the major facilitator superfamily.

It is found in the cell inner membrane. The chain is Putative transporter AmpG 1 (ampG1) from Rickettsia typhi (strain ATCC VR-144 / Wilmington).